A 474-amino-acid chain; its full sequence is UDP-N-acetylmuramate--L-alanine ligase (474 aa).

122–128 serves as a coordination point for ATP; sequence GTHGKTT.

It belongs to the MurCDEF family.

It is found in the cytoplasm. It catalyses the reaction UDP-N-acetyl-alpha-D-muramate + L-alanine + ATP = UDP-N-acetyl-alpha-D-muramoyl-L-alanine + ADP + phosphate + H(+). It functions in the pathway cell wall biogenesis; peptidoglycan biosynthesis. Cell wall formation. This Saccharophagus degradans (strain 2-40 / ATCC 43961 / DSM 17024) protein is UDP-N-acetylmuramate--L-alanine ligase.